Here is a 103-residue protein sequence, read N- to C-terminus: Large ribosomal subunit protein bL21 (103 aa).

It belongs to the bacterial ribosomal protein bL21 family. In terms of assembly, part of the 50S ribosomal subunit. Contacts protein L20.

In terms of biological role, this protein binds to 23S rRNA in the presence of protein L20. In Polynucleobacter asymbioticus (strain DSM 18221 / CIP 109841 / QLW-P1DMWA-1) (Polynucleobacter necessarius subsp. asymbioticus), this protein is Large ribosomal subunit protein bL21.